The sequence spans 330 residues: Flotillin-like protein FloA (330 aa).

2 consecutive transmembrane segments (helical) span residues 6 to 26 (LLLFVIIAAGLIVLSIFFTFV) and 28 to 48 (VMLWISALAAGVRVSIFTLVG).

This sequence belongs to the flotillin-like FloA family. As to quaternary structure, homooligomerizes.

The protein localises to the cell membrane. The protein resides in the membrane raft. Found in functional membrane microdomains (FMM) that may be equivalent to eukaryotic membrane rafts. FMMs are highly dynamic and increase in number as cells age. Flotillins are thought to be important factors in membrane fluidity. In Bacillus pumilus (strain SAFR-032), this protein is Flotillin-like protein FloA.